We begin with the raw amino-acid sequence, 103 residues long: Small ribosomal subunit protein uS10 (103 aa).

The protein belongs to the universal ribosomal protein uS10 family. Part of the 30S ribosomal subunit.

Functionally, involved in the binding of tRNA to the ribosomes. This chain is Small ribosomal subunit protein uS10, found in Vibrio campbellii (strain ATCC BAA-1116).